A 64-amino-acid polypeptide reads, in one-letter code: Large ribosomal subunit protein bL28c (64 aa).

Belongs to the bacterial ribosomal protein bL28 family.

The protein resides in the plastid. It localises to the chloroplast. This is Large ribosomal subunit protein bL28c from Gracilaria tenuistipitata var. liui (Red alga).